We begin with the raw amino-acid sequence, 202 residues long: Histone H1 (202 aa).

Disordered regions lie at residues 1 to 50 (MTAI…VTHP) and 114 to 202 (YKLS…KIAV). Positions 18 to 38 (EASKVKEQAPATDKKPRAPKE) are enriched in basic and acidic residues. Residues 48-118 (THPPYFQMIK…KIKASYKLSE (71 aa)) form the H15 domain. Residues 160-202 (KAKATPKPKKVGAKRTRKSTPAKAKQPKSIKSPAAKRAKKIAV) show a composition bias toward basic residues.

Belongs to the histone H1/H5 family.

It is found in the nucleus. The protein resides in the chromosome. Its function is as follows. Histones H1 are necessary for the condensation of nucleosome chains into higher-order structures. This is Histone H1 from Solanum pennellii (Tomato).